A 205-amino-acid chain; its full sequence is Variable small protein 11 (205 aa).

A signal peptide spans 1–18 (MRKRISAIIMTLFMVFMS). Residue Cys19 is the site of N-palmitoyl cysteine attachment. A lipid anchor (S-diacylglycerol cysteine) is attached at Cys19.

Belongs to the variable small protein (Vsp) family.

It localises to the cell outer membrane. The Vlp and Vsp proteins are antigenically distinct proteins, only one vlp or vsp gene is transcriptionally active at any one time. Switching between these genes is a mechanism of host immune response evasion. This Borrelia hermsii protein is Variable small protein 11.